The following is a 232-amino-acid chain: uncharacterized protein (232 aa).

It is found in the cytoplasm. The protein resides in the nucleus. This is an uncharacterized protein from Saccharomyces cerevisiae (strain ATCC 204508 / S288c) (Baker's yeast).